The primary structure comprises 176 residues: Inorganic pyrophosphatase (176 aa).

Residues lysine 30, arginine 44, and tyrosine 56 each coordinate substrate. Positions 66, 71, and 103 each coordinate Mg(2+). Residue tyrosine 142 participates in substrate binding.

This sequence belongs to the PPase family. In terms of assembly, homohexamer. Requires Mg(2+) as cofactor.

Its subcellular location is the cytoplasm. The enzyme catalyses diphosphate + H2O = 2 phosphate + H(+). Catalyzes the hydrolysis of inorganic pyrophosphate (PPi) forming two phosphate ions. This is Inorganic pyrophosphatase from Vibrio parahaemolyticus serotype O3:K6 (strain RIMD 2210633).